We begin with the raw amino-acid sequence, 452 residues long: Glycylpeptide N-tetradecanoyltransferase (452 aa).

Residues 38–41 (YKFW), 171–173 (LCI), and 179–183 (SKRLA) contribute to the tetradecanoyl-CoA site. The active-site Proton acceptor; via carboxylate is the Leu-452.

The protein belongs to the NMT family. Monomer.

It localises to the cytoplasm. The enzyme catalyses N-terminal glycyl-[protein] + tetradecanoyl-CoA = N-tetradecanoylglycyl-[protein] + CoA + H(+). In terms of biological role, adds a myristoyl group to the N-terminal glycine residue of certain cellular proteins. This chain is Glycylpeptide N-tetradecanoyltransferase (NMT1), found in Eremothecium gossypii (strain ATCC 10895 / CBS 109.51 / FGSC 9923 / NRRL Y-1056) (Yeast).